A 205-amino-acid polypeptide reads, in one-letter code: Small ribosomal subunit protein uS4 (205 aa).

Positions 94 to 157 (SRLDTVVYRM…KQIALIQESI (64 aa)) constitute an S4 RNA-binding domain.

The protein belongs to the universal ribosomal protein uS4 family. Part of the 30S ribosomal subunit. Contacts protein S5. The interaction surface between S4 and S5 is involved in control of translational fidelity.

One of the primary rRNA binding proteins, it binds directly to 16S rRNA where it nucleates assembly of the body of the 30S subunit. Functionally, with S5 and S12 plays an important role in translational accuracy. This chain is Small ribosomal subunit protein uS4, found in Rickettsia canadensis (strain McKiel).